A 575-amino-acid polypeptide reads, in one-letter code: uncharacterized protein (575 aa).

Positions M1 to A28 are cleaved as a signal peptide. Residues S87–A151 form the SLH domain. A coiled-coil region spans residues K158–Q196.

Belongs to the OprB family.

This is an uncharacterized protein from Nostoc sp. (strain PCC 7120 / SAG 25.82 / UTEX 2576).